We begin with the raw amino-acid sequence, 401 residues long: ATP-dependent RNA helicase eIF4A (401 aa).

Positions 28–56 (DNFDDMKLKGELLRGIYAYGFERPSAIQQ) match the Q motif motif. A Helicase ATP-binding domain is found at 59-229 (IMPIVTGRDC…KKFMRDPIRI (171 aa)). Residue 72 to 79 (AQSGTGKT) participates in ATP binding. The short motif at 177–180 (DEAD) is the DEAD box element. The 162-residue stretch at 240-401 (GIRQFYINVE…EMPLNVADLI (162 aa)) folds into the Helicase C-terminal domain.

It belongs to the DEAD box helicase family. eIF4A subfamily. In terms of assembly, component of the eIF4F complex, which composition varies with external and internal environmental conditions. It is composed of at least eIF4A, eIF4E and eIF4G.

Its subcellular location is the cytoplasm. The catalysed reaction is ATP + H2O = ADP + phosphate + H(+). Its function is as follows. ATP-dependent RNA helicase which is a subunit of the eIF4F complex involved in cap recognition and is required for mRNA binding to ribosome. In the current model of translation initiation, eIF4A unwinds RNA secondary structures in the 5'-UTR of mRNAs which is necessary to allow efficient binding of the small ribosomal subunit, and subsequent scanning for the initiator codon. The protein is ATP-dependent RNA helicase eIF4A (TIF1) of Cryptococcus neoformans var. neoformans serotype D (strain B-3501A) (Filobasidiella neoformans).